The chain runs to 1099 residues: Carbamoyl phosphate synthase large chain (1099 aa).

Positions 1 to 402 (MPKREDIKRI…ALGKALRSLE (402 aa)) are carboxyphosphate synthetic domain. ATP is bound by residues Arg-129, Arg-169, Gly-175, Gly-176, Glu-208, Val-210, Glu-215, Gly-241, Ile-242, His-243, Gln-285, and Glu-299. One can recognise an ATP-grasp 1 domain in the interval 133 to 328 (KETMEKAGLE…IAKVAALLAV (196 aa)). Mg(2+) contacts are provided by Gln-285, Glu-299, and Asn-301. Residues Gln-285, Glu-299, and Asn-301 each contribute to the Mn(2+) site. Positions 403–541 (LDAAPKLDLE…STYNGVENEA (139 aa)) are oligomerization domain. Residues 542 to 944 (VPSDREKIMI…AFAKAQIAAG (403 aa)) are carbamoyl phosphate synthetic domain. The ATP-grasp 2 domain occupies 666–857 (AKLLKQIGLK…VARIAAKIMV (192 aa)). The ATP site is built by Arg-702, Lys-741, Leu-743, Glu-748, Gly-773, Val-774, His-775, Ser-776, Gln-816, and Glu-828. 3 residues coordinate Mg(2+): Gln-816, Glu-828, and Asn-830. Residues Gln-816, Glu-828, and Asn-830 each contribute to the Mn(2+) site. The 155-residue stretch at 945-1099 (NPLPTTGAIL…VRRLTDTWKM (155 aa)) folds into the MGS-like domain. The allosteric domain stretch occupies residues 945 to 1099 (NPLPTTGAIL…VRRLTDTWKM (155 aa)).

It belongs to the CarB family. Composed of two chains; the small (or glutamine) chain promotes the hydrolysis of glutamine to ammonia, which is used by the large (or ammonia) chain to synthesize carbamoyl phosphate. Tetramer of heterodimers (alpha,beta)4. Mg(2+) is required as a cofactor. Requires Mn(2+) as cofactor.

It carries out the reaction hydrogencarbonate + L-glutamine + 2 ATP + H2O = carbamoyl phosphate + L-glutamate + 2 ADP + phosphate + 2 H(+). The catalysed reaction is hydrogencarbonate + NH4(+) + 2 ATP = carbamoyl phosphate + 2 ADP + phosphate + 2 H(+). The protein operates within amino-acid biosynthesis; L-arginine biosynthesis; carbamoyl phosphate from bicarbonate: step 1/1. It participates in pyrimidine metabolism; UMP biosynthesis via de novo pathway; (S)-dihydroorotate from bicarbonate: step 1/3. Its function is as follows. Large subunit of the glutamine-dependent carbamoyl phosphate synthetase (CPSase). CPSase catalyzes the formation of carbamoyl phosphate from the ammonia moiety of glutamine, carbonate, and phosphate donated by ATP, constituting the first step of 2 biosynthetic pathways, one leading to arginine and/or urea and the other to pyrimidine nucleotides. The large subunit (synthetase) binds the substrates ammonia (free or transferred from glutamine from the small subunit), hydrogencarbonate and ATP and carries out an ATP-coupled ligase reaction, activating hydrogencarbonate by forming carboxy phosphate which reacts with ammonia to form carbamoyl phosphate. The chain is Carbamoyl phosphate synthase large chain from Thermotoga petrophila (strain ATCC BAA-488 / DSM 13995 / JCM 10881 / RKU-1).